The following is a 153-amino-acid chain: 3-hydroxyacyl-[acyl-carrier-protein] dehydratase FabZ (153 aa).

His-54 is an active-site residue.

This sequence belongs to the thioester dehydratase family. FabZ subfamily.

It localises to the cytoplasm. It carries out the reaction a (3R)-hydroxyacyl-[ACP] = a (2E)-enoyl-[ACP] + H2O. Its function is as follows. Involved in unsaturated fatty acids biosynthesis. Catalyzes the dehydration of short chain beta-hydroxyacyl-ACPs and long chain saturated and unsaturated beta-hydroxyacyl-ACPs. The polypeptide is 3-hydroxyacyl-[acyl-carrier-protein] dehydratase FabZ (Chlamydia muridarum (strain MoPn / Nigg)).